The sequence spans 352 residues: tRNA pseudouridine synthase D (352 aa).

Asp-81 functions as the Nucleophile in the catalytic mechanism. The TRUD domain maps to 158–306 (GVPNYFGQQR…RHERRTLLLK (149 aa)).

It belongs to the pseudouridine synthase TruD family.

The enzyme catalyses uridine(13) in tRNA = pseudouridine(13) in tRNA. Its function is as follows. Responsible for synthesis of pseudouridine from uracil-13 in transfer RNAs. The sequence is that of tRNA pseudouridine synthase D from Photobacterium profundum (strain SS9).